The primary structure comprises 278 residues: Potassium/proton antiporter CemA (278 aa).

Helical transmembrane passes span 61-81 (LIVLVVFPVVVHQVSKNFIIG), 155-175 (AIKNILADSISISVFILLIVL), 203-223 (IILFTDMFIGFHSPHGWEVVI), and 238-258 (FIFLFIATFPVSLDTVFKYWI).

It belongs to the CemA family.

The protein localises to the plastid. The protein resides in the chloroplast inner membrane. The catalysed reaction is K(+)(in) + H(+)(out) = K(+)(out) + H(+)(in). Contributes to K(+)/H(+) antiport activity by supporting proton efflux to control proton extrusion and homeostasis in chloroplasts in a light-dependent manner to modulate photosynthesis. Prevents excessive induction of non-photochemical quenching (NPQ) under continuous-light conditions. Indirectly promotes efficient inorganic carbon uptake into chloroplasts. The protein is Potassium/proton antiporter CemA of Cyanidium caldarium (Red alga).